The following is a 638-amino-acid chain: Influenza virus NS1A-binding protein homolog (638 aa).

The region spanning 32 to 99 (CDVKLQVCGH…AYTSQLKAET (68 aa)) is the BTB domain. The 100-residue stretch at 134–233 (GISCRNFVNT…YYSADHKLLD (100 aa)) folds into the BACK domain. Positions 251–273 (IQKKSPRENNHKNLISSSSGSLS) are disordered. Kelch repeat units lie at residues 365 to 411 (KLIA…VLMD), 412 to 459 (HLYV…ALNG), 461 to 508 (LYVV…ELGN), 509 to 555 (KIYI…VYDG), 557 to 602 (LLVV…AVGN), and 604 to 638 (IYAA…LCES).

The protein localises to the cytoplasm. It is found in the cytoskeleton. Its subcellular location is the nucleus. Functionally, plays a role in cell division and in the dynamic organization of the actin skeleton as a stabilizer of actin filaments by association with F-actin through Kelch repeats. This chain is Influenza virus NS1A-binding protein homolog (ivns1abp), found in Xenopus laevis (African clawed frog).